The following is a 77-amino-acid chain: Acyl carrier protein (77 aa).

One can recognise a Carrier domain in the interval 1–75 (MVFEKVKDII…DVVNYIKAHT (75 aa)). Ser-35 carries the post-translational modification O-(pantetheine 4'-phosphoryl)serine.

Belongs to the acyl carrier protein (ACP) family. Post-translationally, 4'-phosphopantetheine is transferred from CoA to a specific serine of apo-ACP by AcpS. This modification is essential for activity because fatty acids are bound in thioester linkage to the sulfhydryl of the prosthetic group.

The protein localises to the cytoplasm. Its pathway is lipid metabolism; fatty acid biosynthesis. Functionally, carrier of the growing fatty acid chain in fatty acid biosynthesis. This is Acyl carrier protein from Clostridium acetobutylicum (strain ATCC 824 / DSM 792 / JCM 1419 / IAM 19013 / LMG 5710 / NBRC 13948 / NRRL B-527 / VKM B-1787 / 2291 / W).